Reading from the N-terminus, the 235-residue chain is Phosphoribosylformylglycinamidine synthase subunit PurQ (235 aa).

The Glutamine amidotransferase type-1 domain maps to 4 to 234 (GILVFPGTNC…VQHLTGRVIR (231 aa)). Cysteine 86 serves as the catalytic Nucleophile. Catalysis depends on residues histidine 203 and glutamate 205.

In terms of assembly, part of the FGAM synthase complex composed of 1 PurL, 1 PurQ and 2 PurS subunits.

The protein localises to the cytoplasm. It catalyses the reaction N(2)-formyl-N(1)-(5-phospho-beta-D-ribosyl)glycinamide + L-glutamine + ATP + H2O = 2-formamido-N(1)-(5-O-phospho-beta-D-ribosyl)acetamidine + L-glutamate + ADP + phosphate + H(+). The enzyme catalyses L-glutamine + H2O = L-glutamate + NH4(+). It participates in purine metabolism; IMP biosynthesis via de novo pathway; 5-amino-1-(5-phospho-D-ribosyl)imidazole from N(2)-formyl-N(1)-(5-phospho-D-ribosyl)glycinamide: step 1/2. Functionally, part of the phosphoribosylformylglycinamidine synthase complex involved in the purines biosynthetic pathway. Catalyzes the ATP-dependent conversion of formylglycinamide ribonucleotide (FGAR) and glutamine to yield formylglycinamidine ribonucleotide (FGAM) and glutamate. The FGAM synthase complex is composed of three subunits. PurQ produces an ammonia molecule by converting glutamine to glutamate. PurL transfers the ammonia molecule to FGAR to form FGAM in an ATP-dependent manner. PurS interacts with PurQ and PurL and is thought to assist in the transfer of the ammonia molecule from PurQ to PurL. In Symbiobacterium thermophilum (strain DSM 24528 / JCM 14929 / IAM 14863 / T), this protein is Phosphoribosylformylglycinamidine synthase subunit PurQ.